Here is a 342-residue protein sequence, read N- to C-terminus: Ribosomal RNA small subunit methyltransferase C (342 aa).

It belongs to the methyltransferase superfamily. RsmC family. Monomer.

It is found in the cytoplasm. The catalysed reaction is guanosine(1207) in 16S rRNA + S-adenosyl-L-methionine = N(2)-methylguanosine(1207) in 16S rRNA + S-adenosyl-L-homocysteine + H(+). Functionally, specifically methylates the guanine in position 1207 of 16S rRNA in the 30S particle. The chain is Ribosomal RNA small subunit methyltransferase C from Salmonella choleraesuis (strain SC-B67).